Consider the following 274-residue polypeptide: MTLQEEIIRQLGVKASIAPQEEIRKTVDFLKAYLRKHSFLKTYVLGISGGQDSTLAGKLAQMAIAELREETSDQAYQFIAVRLPYGVQADEADAQKALAFIMPDQTLTINIKAAVDGQVEALQAAGVEISDFNKGNIKARQRMISQYAIAGQMAGAVIGTDHAAENITGFFTKFGDGGADILPLFRLNKRQGKALLKVLGADAALYEKVPTADLEDQKPGLTDEVALGVTYQDIDDYLEGKLISKVAQATIEKWWHKGQHKRHLPITIFDDFWK.

Gly46–Ser53 contacts ATP. Asp52 contributes to the Mg(2+) binding site. Position 140 (Arg140) interacts with deamido-NAD(+). Thr160 lines the ATP pocket. Glu165 is a Mg(2+) binding site. Residues Lys173 and Asp180 each contribute to the deamido-NAD(+) site. Residues Lys189 and Thr211 each coordinate ATP. His260–Lys261 contacts deamido-NAD(+).

Belongs to the NAD synthetase family. Homodimer.

The catalysed reaction is deamido-NAD(+) + NH4(+) + ATP = AMP + diphosphate + NAD(+) + H(+). It functions in the pathway cofactor biosynthesis; NAD(+) biosynthesis; NAD(+) from deamido-NAD(+) (ammonia route): step 1/1. Its function is as follows. Catalyzes the ATP-dependent amidation of deamido-NAD to form NAD. Uses ammonia as a nitrogen source. This is NH(3)-dependent NAD(+) synthetase from Streptococcus pyogenes serotype M2 (strain MGAS10270).